The sequence spans 583 residues: ATP-dependent lipid A-core flippase (583 aa).

7 consecutive transmembrane segments (helical) span residues 18–38, 65–85, 105–127, 143–163, 167–187, 252–272, and 277–297; these read LWPI…TLII, IFMW…MSGF, LLFN…ATLM, GALI…IMMF, WQLS…IKLV, VFEP…LYIA, and VIEM…IALM. An ABC transmembrane type-1 domain is found at 30-312; the sequence is IIASITLIIN…LTNVSAQFQR (283 aa). The ABC transporter domain maps to 344–580; sequence IIFDNVTFFY…KGVYSQLYKF (237 aa). An ATP-binding site is contributed by 378-385; the sequence is GRSGSGKS.

It belongs to the ABC transporter superfamily. Lipid exporter (TC 3.A.1.106) family. Homodimer.

Its subcellular location is the cell inner membrane. The enzyme catalyses ATP + H2O + lipid A-core oligosaccharideSide 1 = ADP + phosphate + lipid A-core oligosaccharideSide 2.. Its function is as follows. Involved in lipopolysaccharide (LPS) biosynthesis. Translocates lipid A-core from the inner to the outer leaflet of the inner membrane. Transmembrane domains (TMD) form a pore in the inner membrane and the ATP-binding domain (NBD) is responsible for energy generation. This is ATP-dependent lipid A-core flippase from Blochmanniella floridana.